We begin with the raw amino-acid sequence, 204 residues long: Sperm acrosome developmental regulator (204 aa).

Phosphoserine is present on serine 65. Basic residues predominate over residues 172–184 (RRQERRRRHHLRA). The tract at residues 172–204 (RRQERRRRHHLRAHMGPQPDPAQGLKQDARSPL) is disordered.

Its subcellular location is the cytoplasmic vesicle. It is found in the secretory vesicle. The protein resides in the acrosome. May play an important role in acrosome formation and nucleus shaping during spermiogenesis. This chain is Sperm acrosome developmental regulator (SPACDR), found in Bos taurus (Bovine).